We begin with the raw amino-acid sequence, 399 residues long: Phosphoglycerate kinase (399 aa).

Substrate contacts are provided by residues 21–23 (DFN), Arg-37, 60–63 (HLGR), Arg-119, and Arg-152. Residues Lys-205, Gly-296, Glu-327, and 353 to 356 (GGDT) each bind ATP.

This sequence belongs to the phosphoglycerate kinase family. Monomer.

It is found in the cytoplasm. It carries out the reaction (2R)-3-phosphoglycerate + ATP = (2R)-3-phospho-glyceroyl phosphate + ADP. The protein operates within carbohydrate degradation; glycolysis; pyruvate from D-glyceraldehyde 3-phosphate: step 2/5. This is Phosphoglycerate kinase from Sulfurimonas denitrificans (strain ATCC 33889 / DSM 1251) (Thiomicrospira denitrificans (strain ATCC 33889 / DSM 1251)).